The primary structure comprises 417 residues: Putative nickel insertion protein (417 aa).

The tract at residues 69–99 is disordered; it reads HEHHHDHGHHHHGHGHHHDHTHDHHHHHEHR. A compositionally biased stretch (basic residues) spans 74–99; sequence DHGHHHHGHGHHHDHTHDHHHHHEHR.

It belongs to the LarC family.

This chain is Putative nickel insertion protein, found in Maridesulfovibrio salexigens (strain ATCC 14822 / DSM 2638 / NCIMB 8403 / VKM B-1763) (Desulfovibrio salexigens).